The sequence spans 502 residues: Glycerol kinase (502 aa).

Thr14 contacts ADP. Positions 14, 15, and 16 each coordinate ATP. Sn-glycerol 3-phosphate is bound at residue Thr14. Arg18 contributes to the ADP binding site. Positions 84, 85, 136, and 246 each coordinate sn-glycerol 3-phosphate. 5 residues coordinate glycerol: Arg84, Glu85, Tyr136, Asp246, and Gln247. ADP is bound by residues Thr268 and Gly311. Thr268, Gly311, Gln315, and Gly412 together coordinate ATP. 2 residues coordinate ADP: Gly412 and Asn416.

This sequence belongs to the FGGY kinase family. Homotetramer and homodimer (in equilibrium). Heterodimer with EIIA-Glc. Binds 1 zinc ion per glycerol kinase EIIA-Glc dimer. The zinc ion is important for dimerization.

The catalysed reaction is glycerol + ATP = sn-glycerol 3-phosphate + ADP + H(+). It participates in polyol metabolism; glycerol degradation via glycerol kinase pathway; sn-glycerol 3-phosphate from glycerol: step 1/1. Activity of this regulatory enzyme is affected by several metabolites. Allosterically and non-competitively inhibited by fructose 1,6-bisphosphate (FBP) and unphosphorylated phosphocarrier protein EIIA-Glc (III-Glc), an integral component of the bacterial phosphotransferase (PTS) system. In terms of biological role, key enzyme in the regulation of glycerol uptake and metabolism. Catalyzes the phosphorylation of glycerol to yield sn-glycerol 3-phosphate. The chain is Glycerol kinase from Salmonella agona (strain SL483).